Consider the following 322-residue polypeptide: Lipoyl synthase (322 aa).

Residues 1–14 (MKTLDENQAPSRQT) are compositionally biased toward polar residues. Positions 1-30 (MKTLDENQAPSRQTPESHRRGAEKLSRIPV) are disordered. The segment covering 15–26 (PESHRRGAEKLS) has biased composition (basic and acidic residues). 7 residues coordinate [4Fe-4S] cluster: Cys70, Cys75, Cys81, Cys96, Cys100, Cys103, and Ser310. Positions 82–299 (FGHGTATFMI…AGYARELGFA (218 aa)) constitute a Radical SAM core domain.

This sequence belongs to the radical SAM superfamily. Lipoyl synthase family. The cofactor is [4Fe-4S] cluster.

It localises to the cytoplasm. The enzyme catalyses [[Fe-S] cluster scaffold protein carrying a second [4Fe-4S](2+) cluster] + N(6)-octanoyl-L-lysyl-[protein] + 2 oxidized [2Fe-2S]-[ferredoxin] + 2 S-adenosyl-L-methionine + 4 H(+) = [[Fe-S] cluster scaffold protein] + N(6)-[(R)-dihydrolipoyl]-L-lysyl-[protein] + 4 Fe(3+) + 2 hydrogen sulfide + 2 5'-deoxyadenosine + 2 L-methionine + 2 reduced [2Fe-2S]-[ferredoxin]. Its pathway is protein modification; protein lipoylation via endogenous pathway; protein N(6)-(lipoyl)lysine from octanoyl-[acyl-carrier-protein]: step 2/2. Functionally, catalyzes the radical-mediated insertion of two sulfur atoms into the C-6 and C-8 positions of the octanoyl moiety bound to the lipoyl domains of lipoate-dependent enzymes, thereby converting the octanoylated domains into lipoylated derivatives. This Methylococcus capsulatus (strain ATCC 33009 / NCIMB 11132 / Bath) protein is Lipoyl synthase.